We begin with the raw amino-acid sequence, 414 residues long: Secernin-1 (414 aa).

Alanine 2 is subject to N-acetylalanine. The active site involves cysteine 9.

This sequence belongs to the peptidase C69 family. Secernin subfamily.

Its subcellular location is the cytoplasm. Functionally, regulates exocytosis in mast cells. Increases both the extent of secretion and the sensitivity of mast cells to stimulation with calcium. The polypeptide is Secernin-1 (SCRN1) (Homo sapiens (Human)).